Reading from the N-terminus, the 229-residue chain is Triosephosphate isomerase (229 aa).

9–11 provides a ligand contact to substrate; the sequence is NYK. Histidine 93 acts as the Electrophile in catalysis. The Proton acceptor role is filled by glutamate 141. Residues isoleucine 146, glycine 180, and 201–202 contribute to the substrate site; that span reads AS.

Belongs to the triosephosphate isomerase family. As to quaternary structure, homotetramer; dimer of dimers.

It is found in the cytoplasm. The enzyme catalyses D-glyceraldehyde 3-phosphate = dihydroxyacetone phosphate. It functions in the pathway carbohydrate biosynthesis; gluconeogenesis. The protein operates within carbohydrate degradation; glycolysis; D-glyceraldehyde 3-phosphate from glycerone phosphate: step 1/1. Involved in the gluconeogenesis. Catalyzes stereospecifically the conversion of dihydroxyacetone phosphate (DHAP) to D-glyceraldehyde-3-phosphate (G3P). The protein is Triosephosphate isomerase of Sulfurisphaera tokodaii (strain DSM 16993 / JCM 10545 / NBRC 100140 / 7) (Sulfolobus tokodaii).